The primary structure comprises 72 residues: Translation initiation factor IF-1 (72 aa).

One can recognise an S1-like domain in the interval 1 to 72; that stretch reads MAKQDVIELE…TRGRITYRYK (72 aa).

The protein belongs to the IF-1 family. As to quaternary structure, component of the 30S ribosomal translation pre-initiation complex which assembles on the 30S ribosome in the order IF-2 and IF-3, IF-1 and N-formylmethionyl-tRNA(fMet); mRNA recruitment can occur at any time during PIC assembly.

Its subcellular location is the cytoplasm. Functionally, one of the essential components for the initiation of protein synthesis. Stabilizes the binding of IF-2 and IF-3 on the 30S subunit to which N-formylmethionyl-tRNA(fMet) subsequently binds. Helps modulate mRNA selection, yielding the 30S pre-initiation complex (PIC). Upon addition of the 50S ribosomal subunit IF-1, IF-2 and IF-3 are released leaving the mature 70S translation initiation complex. This is Translation initiation factor IF-1 from Staphylococcus aureus (strain USA300 / TCH1516).